Here is a 268-residue protein sequence, read N- to C-terminus: uncharacterized protein (268 aa).

The chain crosses the membrane as a helical span at residues Leu-150 to Ala-172.

It localises to the host membrane. This is an uncharacterized protein from Sulfolobus islandicus rod-shaped virus 1 (SIRV-1).